The primary structure comprises 487 residues: NADH-quinone oxidoreductase subunit N (487 aa).

The next 13 membrane-spanning stretches (helical) occupy residues 18–38 (LVPE…DLFV), 44–64 (VWTH…LATG), 84–104 (VMKT…WTYL), 116–136 (VLVL…SLLM), 169–189 (FVLG…VYGA), 211–231 (LLTG…AAPF), 242–262 (APAP…FGMA), 277–297 (WHLL…LMAI), 305–325 (MLAY…AGGG), 333–353 (MFYA…IIAL), 377–397 (AGLV…LGFW), 410–430 (DMLW…YYYL), and 457–477 (VLGV…PIMV).

Belongs to the complex I subunit 2 family. As to quaternary structure, NDH-1 is composed of 14 different subunits. Subunits NuoA, H, J, K, L, M, N constitute the membrane sector of the complex.

It localises to the cell inner membrane. The enzyme catalyses a quinone + NADH + 5 H(+)(in) = a quinol + NAD(+) + 4 H(+)(out). In terms of biological role, NDH-1 shuttles electrons from NADH, via FMN and iron-sulfur (Fe-S) centers, to quinones in the respiratory chain. The immediate electron acceptor for the enzyme in this species is believed to be ubiquinone. Couples the redox reaction to proton translocation (for every two electrons transferred, four hydrogen ions are translocated across the cytoplasmic membrane), and thus conserves the redox energy in a proton gradient. The sequence is that of NADH-quinone oxidoreductase subunit N from Xanthomonas euvesicatoria pv. vesicatoria (strain 85-10) (Xanthomonas campestris pv. vesicatoria).